The chain runs to 461 residues: Probable ornithine decarboxylase (461 aa).

The interval 1-35 (MTGTKRNGEEVVNENNNNNVAEETNKKAKVDESST) is disordered. Residues 13–22 (NENNNNNVAE) are compositionally biased toward low complexity. Residues 23–32 (ETNKKAKVDE) are compositionally biased toward basic and acidic residues. Lys116 bears the N6-(pyridoxal phosphate)lysine mark. Residues Ser247, Gly284, and 317–320 (EPGR) contribute to the pyridoxal 5'-phosphate site. 375-376 (FD) contributes to the substrate binding site. Cys402 serves as the catalytic Proton donor; shared with dimeric partner. Asp403 serves as a coordination point for substrate. Position 431 (Tyr431) interacts with pyridoxal 5'-phosphate.

This sequence belongs to the Orn/Lys/Arg decarboxylase class-II family. Homodimer. Only the dimer is catalytically active, as the active sites are constructed of residues from both monomers. The cofactor is pyridoxal 5'-phosphate.

It catalyses the reaction L-ornithine + H(+) = putrescine + CO2. It functions in the pathway amine and polyamine biosynthesis; putrescine biosynthesis via L-ornithine pathway; putrescine from L-ornithine: step 1/1. Inhibited by antizyme (AZ) in response to polyamine levels. AZ inhibits the assembly of the functional homodimer by binding to ODC monomers and targeting them for ubiquitin-independent proteolytic destruction by the 26S proteasome. Its function is as follows. Catalyzes the first and rate-limiting step of polyamine biosynthesis that converts ornithine into putrescine, which is the precursor for the polyamines, spermidine and spermine. Polyamines are essential for cell proliferation and are implicated in cellular processes, ranging from DNA replication to apoptosis. The chain is Probable ornithine decarboxylase (odc) from Dictyostelium discoideum (Social amoeba).